Here is a 105-residue protein sequence, read N- to C-terminus: Large ribosomal subunit protein bL21 (105 aa).

The protein belongs to the bacterial ribosomal protein bL21 family. As to quaternary structure, part of the 50S ribosomal subunit. Contacts protein L20.

This protein binds to 23S rRNA in the presence of protein L20. In Rickettsia bellii (strain OSU 85-389), this protein is Large ribosomal subunit protein bL21.